The sequence spans 318 residues: Myoblast determination protein 1 (318 aa).

Residue methionine 1 forms a Peptide (Met-Gly) (interchain with G-Cter in ubiquitin) linkage. Lysine 104 carries the N6-methyllysine; by EHMT2 modification. A bHLH domain is found at 109-160 (DRRKAATMRERRRLSKVNEAFETLKRCTSSNPNQRLPKVEILRNAIRYIEGL). 2 disordered regions span residues 175-225 (AAFY…QNGY) and 265-318 (APAL…YQVL). The segment covering 196–206 (SDASSPRSNCS) has biased composition (polar residues). Residues 265 to 274 (APALLLADAP) are compositionally biased toward low complexity. Polar residues-rich tracts occupy residues 287 to 298 (LSDTEQGTQTPS) and 307 to 318 (AGSNPNAIYQVL).

As to quaternary structure, interacts with SUV39H1. Efficient DNA binding requires dimerization with another bHLH protein. Seems to form active heterodimers with ITF-2. Interacts with DDX5. Interacts with CHD2. Interacts with TSC22D3 isoform 1 and isoform 4. Interacts with SETD3. Interacts with P-TEFB complex; promotes the transcriptional activity of MYOD1 through its CDK9-mediated phosphorylation. Interacts with CSRP3. Interacts with NUPR1. In terms of processing, acetylated by a complex containing EP300 and PCAF. The acetylation is essential to activate target genes. Conversely, its deacetylation by SIRT1 inhibits its function. Ubiquitinated on the N-terminus; which is required for proteasomal degradation. Post-translationally, phosphorylated by CDK9. This phosphorylation promotes its function in muscle differentiation. In terms of processing, methylation at Lys-104 by EHMT2/G9a inhibits myogenic activity.

Its subcellular location is the nucleus. Acts as a transcriptional activator that promotes transcription of muscle-specific target genes and plays a role in muscle differentiation. Together with MYF5 and MYOG, co-occupies muscle-specific gene promoter core region during myogenesis. Induces fibroblasts to differentiate into myoblasts. Interacts with and is inhibited by the twist protein. This interaction probably involves the basic domains of both proteins. The protein is Myoblast determination protein 1 (Myod1) of Mus musculus (Mouse).